The following is a 364-amino-acid chain: Dihydroorotate dehydrogenase (quinone) (364 aa).

Residues 61-65 and Thr85 contribute to the FMN site; that span reads AGYDK. Lys65 is a binding site for substrate. 110–114 lines the substrate pocket; that stretch reads NRLGF. Positions 139 and 170 each coordinate FMN. Substrate is bound at residue Asn170. Ser173 functions as the Nucleophile in the catalytic mechanism. Residue Asn175 coordinates substrate. The FMN site is built by Lys215 and Ser243. Substrate is bound at residue 244-245; the sequence is NT. FMN contacts are provided by residues Gly266, Gly295, and 316–317; that span reads YT.

This sequence belongs to the dihydroorotate dehydrogenase family. Type 2 subfamily. As to quaternary structure, monomer. FMN is required as a cofactor.

The protein resides in the cell membrane. The enzyme catalyses (S)-dihydroorotate + a quinone = orotate + a quinol. Its pathway is pyrimidine metabolism; UMP biosynthesis via de novo pathway; orotate from (S)-dihydroorotate (quinone route): step 1/1. Functionally, catalyzes the conversion of dihydroorotate to orotate with quinone as electron acceptor. This Brucella canis (strain ATCC 23365 / NCTC 10854 / RM-666) protein is Dihydroorotate dehydrogenase (quinone).